Consider the following 312-residue polypeptide: D-alanine--D-alanine ligase (312 aa).

Residues 108–308 (KLVWQQTGIP…YSELVVKVLS (201 aa)) enclose the ATP-grasp domain. 138-193 (VAKLGMPLFVKPASEGSSVAVEKVKSADALPAALEEAAKHDKIVIVEKSIEGGGEY) contacts ATP. Mg(2+)-binding residues include Asp262, Glu275, and Asn277.

It belongs to the D-alanine--D-alanine ligase family. Mg(2+) is required as a cofactor. It depends on Mn(2+) as a cofactor.

It localises to the cytoplasm. It catalyses the reaction 2 D-alanine + ATP = D-alanyl-D-alanine + ADP + phosphate + H(+). The protein operates within cell wall biogenesis; peptidoglycan biosynthesis. Functionally, cell wall formation. The sequence is that of D-alanine--D-alanine ligase from Burkholderia thailandensis (strain ATCC 700388 / DSM 13276 / CCUG 48851 / CIP 106301 / E264).